We begin with the raw amino-acid sequence, 308 residues long: Energy-coupling factor transporter ATP-binding protein EcfA2 (308 aa).

The 261-residue stretch at 3–263 folds into the ABC transporter domain; the sequence is IEVKNISKVF…VDFLRENEME (261 aa). Position 40–47 (40–47) interacts with ATP; sequence GPTGSGKT.

It belongs to the ABC transporter superfamily. Energy-coupling factor EcfA family. In terms of assembly, forms a stable energy-coupling factor (ECF) transporter complex composed of 2 membrane-embedded substrate-binding proteins (S component), 2 ATP-binding proteins (A component) and 2 transmembrane proteins (T component).

It localises to the cell membrane. In terms of biological role, ATP-binding (A) component of a common energy-coupling factor (ECF) ABC-transporter complex. Unlike classic ABC transporters this ECF transporter provides the energy necessary to transport a number of different substrates. This Mycoplasma mobile (strain ATCC 43663 / 163K / NCTC 11711) (Mesomycoplasma mobile) protein is Energy-coupling factor transporter ATP-binding protein EcfA2.